The sequence spans 635 residues: Threonine--tRNA ligase (635 aa).

The 61-residue stretch at 1–61 (MVSIRLPDGS…DHDASLAIVT (61 aa)) folds into the TGS domain. The segment at 242 to 533 (DHRKLGKQLD…LIEHHAGAMP (292 aa)) is catalytic. Zn(2+)-binding residues include Cys333, His384, and His510.

It belongs to the class-II aminoacyl-tRNA synthetase family. As to quaternary structure, homodimer. Zn(2+) serves as cofactor.

The protein resides in the cytoplasm. The enzyme catalyses tRNA(Thr) + L-threonine + ATP = L-threonyl-tRNA(Thr) + AMP + diphosphate + H(+). Its function is as follows. Catalyzes the attachment of threonine to tRNA(Thr) in a two-step reaction: L-threonine is first activated by ATP to form Thr-AMP and then transferred to the acceptor end of tRNA(Thr). Also edits incorrectly charged L-seryl-tRNA(Thr). This is Threonine--tRNA ligase from Burkholderia multivorans (strain ATCC 17616 / 249).